The primary structure comprises 1450 residues: M-protein, striated muscle (1450 aa).

Residues A66 to E87 are disordered. Ig-like C2-type domains lie at P142–V233 and P254–F359. Fibronectin type-III domains follow at residues A373 to P468, P501 to I596, A602 to A695, C698 to E800, and P803 to G900. 5 Ig-like C2-type domains span residues P899–L995, P1002–K1115, P1118–S1204, P1225–K1322, and K1333–S1422.

Expressed in pectoralis and cardiac muscle.

Functionally, is a structural constituent of myofibrillar M-band in striated muscle. This Gallus gallus (Chicken) protein is M-protein, striated muscle.